The following is a 216-amino-acid chain: MNVSILFDNFSMYMDGFYHTLLASVIALAGSFVLGVAVAVMRITVFKPLQWLGTAYVEFIRNIPLLLITFVFYFGLPNAGLRLDGFQAGTVALTIYTSAFIAEAIRAGIQSVSKGQMEAARSSGFTYSQAMLHIILPQAIKIVIPPLGNQFLNLVKNSSILGVVAGLDLMYQADLVSSSTLVVFDVYIFVALFYLVLTIPLSIGVNYLEKRLEKSY.

Residues 17–205 (FYHTLLASVI…VLTIPLSIGV (189 aa)) enclose the ABC transmembrane type-1 domain. The next 5 membrane-spanning stretches (helical) occupy residues 21-41 (LLAS…VAVM), 63-83 (IPLL…GLRL), 85-105 (GFQA…AEAI), 132-152 (LHII…NQFL), and 181-201 (LVVF…TIPL).

It belongs to the binding-protein-dependent transport system permease family. In terms of assembly, the complex is composed of two ATP-binding proteins (GlnQ), two transmembrane proteins (GlnM and GlnP) and a solute-binding protein (GlnH).

The protein localises to the cell membrane. Part of the ABC transporter complex GlnHMPQ involved in glutamine transport. Probably responsible for the translocation of the substrate across the membrane. This chain is Probable glutamine ABC transporter permease protein GlnM (glnM), found in Bacillus subtilis (strain 168).